The chain runs to 396 residues: Elongation factor Tu (396 aa).

The tr-type G domain maps to 10–206; that stretch reads KPHCNIGTIG…TVDAYIPQPE (197 aa). Residues 19 to 26 form a G1 region; that stretch reads GHVDHGKT. 19 to 26 contacts GTP; the sequence is GHVDHGKT. Mg(2+) is bound at residue threonine 26. The tract at residues 60-64 is G2; the sequence is GITIS. Residues 81–84 form a G3 region; it reads DCPG. GTP contacts are provided by residues 81 to 85 and 136 to 139; these read DCPGH and NKVD. The segment at 136–139 is G4; the sequence is NKVD. The G5 stretch occupies residues 174-176; it reads SAL.

It belongs to the TRAFAC class translation factor GTPase superfamily. Classic translation factor GTPase family. EF-Tu/EF-1A subfamily. Monomer.

It localises to the cytoplasm. It carries out the reaction GTP + H2O = GDP + phosphate + H(+). Its function is as follows. GTP hydrolase that promotes the GTP-dependent binding of aminoacyl-tRNA to the A-site of ribosomes during protein biosynthesis. This chain is Elongation factor Tu, found in Methylocella silvestris (strain DSM 15510 / CIP 108128 / LMG 27833 / NCIMB 13906 / BL2).